The sequence spans 114 residues: Large ribosomal subunit protein uL22 (114 aa).

The protein belongs to the universal ribosomal protein uL22 family. As to quaternary structure, part of the 50S ribosomal subunit.

Functionally, this protein binds specifically to 23S rRNA; its binding is stimulated by other ribosomal proteins, e.g. L4, L17, and L20. It is important during the early stages of 50S assembly. It makes multiple contacts with different domains of the 23S rRNA in the assembled 50S subunit and ribosome. In terms of biological role, the globular domain of the protein is located near the polypeptide exit tunnel on the outside of the subunit, while an extended beta-hairpin is found that lines the wall of the exit tunnel in the center of the 70S ribosome. This is Large ribosomal subunit protein uL22 from Lysinibacillus sphaericus (strain C3-41).